The sequence spans 565 residues: Dihydroxy-acid dehydratase (565 aa).

C50 provides a ligand contact to [2Fe-2S] cluster. Residue D82 coordinates Mg(2+). Residue C123 participates in [2Fe-2S] cluster binding. Mg(2+)-binding residues include D124 and K125. At K125 the chain carries N6-carboxylysine. Residue C195 coordinates [2Fe-2S] cluster. A Mg(2+)-binding site is contributed by E447. The Proton acceptor role is filled by S473.

It belongs to the IlvD/Edd family. Homodimer. It depends on [2Fe-2S] cluster as a cofactor. Mg(2+) serves as cofactor.

The enzyme catalyses (2R)-2,3-dihydroxy-3-methylbutanoate = 3-methyl-2-oxobutanoate + H2O. It carries out the reaction (2R,3R)-2,3-dihydroxy-3-methylpentanoate = (S)-3-methyl-2-oxopentanoate + H2O. The protein operates within amino-acid biosynthesis; L-isoleucine biosynthesis; L-isoleucine from 2-oxobutanoate: step 3/4. It participates in amino-acid biosynthesis; L-valine biosynthesis; L-valine from pyruvate: step 3/4. Functions in the biosynthesis of branched-chain amino acids. Catalyzes the dehydration of (2R,3R)-2,3-dihydroxy-3-methylpentanoate (2,3-dihydroxy-3-methylvalerate) into 2-oxo-3-methylpentanoate (2-oxo-3-methylvalerate) and of (2R)-2,3-dihydroxy-3-methylbutanoate (2,3-dihydroxyisovalerate) into 2-oxo-3-methylbutanoate (2-oxoisovalerate), the penultimate precursor to L-isoleucine and L-valine, respectively. The sequence is that of Dihydroxy-acid dehydratase from Halorhodospira halophila (strain DSM 244 / SL1) (Ectothiorhodospira halophila (strain DSM 244 / SL1)).